A 117-amino-acid chain; its full sequence is Large ribosomal subunit protein bL19 (117 aa).

This sequence belongs to the bacterial ribosomal protein bL19 family.

Functionally, this protein is located at the 30S-50S ribosomal subunit interface and may play a role in the structure and function of the aminoacyl-tRNA binding site. The chain is Large ribosomal subunit protein bL19 from Phocaeicola vulgatus (strain ATCC 8482 / DSM 1447 / JCM 5826 / CCUG 4940 / NBRC 14291 / NCTC 11154) (Bacteroides vulgatus).